The sequence spans 864 residues: DNA mismatch repair protein MutS (864 aa).

An ATP-binding site is contributed by 607–614 (GPNMGGKS).

It belongs to the DNA mismatch repair MutS family.

This protein is involved in the repair of mismatches in DNA. It is possible that it carries out the mismatch recognition step. This protein has a weak ATPase activity. This is DNA mismatch repair protein MutS from Neisseria meningitidis serogroup A / serotype 4A (strain DSM 15465 / Z2491).